The sequence spans 189 residues: Small ribosomal subunit protein uS4 (189 aa).

The S4 RNA-binding domain occupies 107–181 (RRLQTQVFKL…VKRRTLRKGD (75 aa)). A disordered region spans residues 161 to 189 (QSPYGGGRPGRVKRRTLRKGDGAGGDDEE).

This sequence belongs to the universal ribosomal protein uS4 family. Component of the small ribosomal subunit. Part of the small subunit (SSU) processome, composed of more than 70 proteins and the RNA chaperone small nucleolar RNA (snoRNA) U3.

Its subcellular location is the cytoplasm. The protein localises to the nucleus. It is found in the nucleolus. In terms of biological role, component of the small ribosomal subunit. The ribosome is a large ribonucleoprotein complex responsible for the synthesis of proteins in the cell. Part of the small subunit (SSU) processome, first precursor of the small eukaryotic ribosomal subunit. During the assembly of the SSU processome in the nucleolus, many ribosome biogenesis factors, an RNA chaperone and ribosomal proteins associate with the nascent pre-rRNA and work in concert to generate RNA folding, modifications, rearrangements and cleavage as well as targeted degradation of pre-ribosomal RNA by the RNA exosome. The sequence is that of Small ribosomal subunit protein uS4 (rps-9) from Caenorhabditis elegans.